The following is a 59-amino-acid chain: MAVQQNKKSPSKRGMHRSHDALTAPALSVDSTTGEVHRPHHISPNGMYRGRKVVKVKGE.

The tract at residues 1–59 (MAVQQNKKSPSKRGMHRSHDALTAPALSVDSTTGEVHRPHHISPNGMYRGRKVVKVKGE) is disordered. A compositionally biased stretch (basic residues) spans 49-59 (RGRKVVKVKGE).

The protein belongs to the bacterial ribosomal protein bL32 family.

This chain is Large ribosomal subunit protein bL32 (rpmF), found in Neisseria meningitidis serogroup A / serotype 4A (strain DSM 15465 / Z2491).